The sequence spans 422 residues: Probable zinc-type alcohol dehydrogenase-like protein L498 (422 aa).

Residues Cys-108, His-129, Cys-160, Cys-163, Cys-166, Cys-174, and Cys-231 each contribute to the Zn(2+) site.

Zn(2+) is required as a cofactor.

It is found in the host cytoplasm. It localises to the virion. This is Probable zinc-type alcohol dehydrogenase-like protein L498 from Acanthamoeba polyphaga (Amoeba).